The primary structure comprises 338 residues: Cytochrome c biogenesis protein CcsA (338 aa).

Helical transmembrane passes span 11 to 31, 39 to 59, 76 to 96, 100 to 120, 145 to 165, 244 to 264, 278 to 295, and 305 to 325; these read VLLD…YWLA, LLHE…TGLL, ESLF…EAFA, LVGV…SLTL, VMIL…AFLI, LIGL…VWAN, TWSL…HARI, and ATLA…VNFL.

The protein belongs to the CcmF/CycK/Ccl1/NrfE/CcsA family. In terms of assembly, may interact with ccs1.

The protein localises to the cell inner membrane. Required during biogenesis of c-type cytochromes (cytochrome c6 and cytochrome f) at the step of heme attachment. The sequence is that of Cytochrome c biogenesis protein CcsA from Gloeobacter violaceus (strain ATCC 29082 / PCC 7421).